The primary structure comprises 379 residues: 3-dehydroquinate synthase (379 aa).

NAD(+)-binding positions include 67–72, 101–105, 125–126, Lys-138, and Lys-147; these read PGEKNK, GIVLD, and TT. Residues Glu-180, His-242, and His-258 each coordinate Zn(2+).

The protein belongs to the sugar phosphate cyclases superfamily. Dehydroquinate synthase family. Requires NAD(+) as cofactor. It depends on Co(2+) as a cofactor. Zn(2+) is required as a cofactor.

It is found in the cytoplasm. It carries out the reaction 7-phospho-2-dehydro-3-deoxy-D-arabino-heptonate = 3-dehydroquinate + phosphate. It functions in the pathway metabolic intermediate biosynthesis; chorismate biosynthesis; chorismate from D-erythrose 4-phosphate and phosphoenolpyruvate: step 2/7. Its function is as follows. Catalyzes the conversion of 3-deoxy-D-arabino-heptulosonate 7-phosphate (DAHP) to dehydroquinate (DHQ). This chain is 3-dehydroquinate synthase, found in Chlamydia felis (strain Fe/C-56) (Chlamydophila felis).